The primary structure comprises 632 residues: tRNA uridine 5-carboxymethylaminomethyl modification enzyme MnmG (632 aa).

An FAD-binding site is contributed by 13–18 (GGGHAG). Residue 274–288 (GPRYCPSIEDKVMRF) coordinates NAD(+).

This sequence belongs to the MnmG family. Homodimer. Heterotetramer of two MnmE and two MnmG subunits. FAD serves as cofactor.

It localises to the cytoplasm. Its function is as follows. NAD-binding protein involved in the addition of a carboxymethylaminomethyl (cmnm) group at the wobble position (U34) of certain tRNAs, forming tRNA-cmnm(5)s(2)U34. The chain is tRNA uridine 5-carboxymethylaminomethyl modification enzyme MnmG from Dichelobacter nodosus (strain VCS1703A).